The chain runs to 713 residues: Glycine--tRNA ligase beta subunit (713 aa).

The protein belongs to the class-II aminoacyl-tRNA synthetase family. In terms of assembly, tetramer of two alpha and two beta subunits.

It is found in the cytoplasm. The enzyme catalyses tRNA(Gly) + glycine + ATP = glycyl-tRNA(Gly) + AMP + diphosphate. The chain is Glycine--tRNA ligase beta subunit from Picosynechococcus sp. (strain ATCC 27264 / PCC 7002 / PR-6) (Agmenellum quadruplicatum).